The chain runs to 35 residues: Mu-theraphotoxin-Pm1a (35 aa).

Cystine bridges form between C3-C17, C10-C22, and C16-C29. F35 is subject to Phenylalanine amide.

The protein belongs to the neurotoxin 10 (Hwtx-1) family. 62 (Vatx) subfamily. As to expression, expressed by the venom gland.

Its subcellular location is the secreted. Functionally, gating-modifier toxin with weak activity on Nav1.7/SCN9A and Nav1.8/SCN10A. Inhibits Nav1.7/SCN9A peak current (IC(50)=334 nM) and shifts the voltage dependence of activation to more depolarised membrane potentials. Shows 21% peak current inhibition (at 10 uM) on Nav1.8/SCN10A sodium channels. The chain is Mu-theraphotoxin-Pm1a from Poecilotheria metallica (Metallic blue ornamental tree spider).